We begin with the raw amino-acid sequence, 526 residues long: Peptide chain release factor 3 (526 aa).

Residues 9-277 (DKRRTFAIIS…GIVEWAPKPQ (269 aa)) form the tr-type G domain. Residues 18–25 (SHPDAGKT), 86–90 (DTPGH), and 140–143 (NKLD) contribute to the GTP site.

The protein belongs to the TRAFAC class translation factor GTPase superfamily. Classic translation factor GTPase family. PrfC subfamily.

The protein resides in the cytoplasm. In terms of biological role, increases the formation of ribosomal termination complexes and stimulates activities of RF-1 and RF-2. It binds guanine nucleotides and has strong preference for UGA stop codons. It may interact directly with the ribosome. The stimulation of RF-1 and RF-2 is significantly reduced by GTP and GDP, but not by GMP. The polypeptide is Peptide chain release factor 3 (Shewanella sediminis (strain HAW-EB3)).